The primary structure comprises 389 residues: 8-amino-7-oxononanoate synthase (389 aa).

Arg19 lines the substrate pocket. Residue Gly106–Tyr107 participates in pyridoxal 5'-phosphate binding. Residue His131 coordinates substrate. Pyridoxal 5'-phosphate contacts are provided by Ser176, His204, and Thr233. Lys236 bears the N6-(pyridoxal phosphate)lysine mark. Thr350 serves as a coordination point for substrate.

Belongs to the class-II pyridoxal-phosphate-dependent aminotransferase family. BioF subfamily. Homodimer. Requires pyridoxal 5'-phosphate as cofactor.

It catalyses the reaction 6-carboxyhexanoyl-[ACP] + L-alanine + H(+) = (8S)-8-amino-7-oxononanoate + holo-[ACP] + CO2. It functions in the pathway cofactor biosynthesis; biotin biosynthesis. In terms of biological role, catalyzes the decarboxylative condensation of pimeloyl-[acyl-carrier protein] and L-alanine to produce 8-amino-7-oxononanoate (AON), [acyl-carrier protein], and carbon dioxide. The protein is 8-amino-7-oxononanoate synthase of Ectopseudomonas mendocina (strain ymp) (Pseudomonas mendocina).